Consider the following 426-residue polypeptide: Arrestin domain-containing protein 17 (426 aa).

A compositionally biased stretch (polar residues) spans 320–329 (QSAGNGSLPK). Residues 320 to 340 (QSAGNGSLPKSSIKDSPPKWD) form a disordered region. Residues 331-340 (SIKDSPPKWD) show a composition bias toward basic and acidic residues.

Belongs to the arrestin family. As to quaternary structure, interacts with tax-6. Post-translationally, phosphorylated. Dephosphorylated by tax-6 in vitro. As to expression, expressed from the comma stage to adulthood in the nervous system, including sensory neurons and interneurons posterior to the nerve ring, dorsal and ventral nerve cords, tail ganglia and, CEP, HSN, ASK, ADL, ASH and ASJ neurons.

Involved in several behavioral responses including chemotaxis towards lysine and adaptation to repeated osmotic stress. In addition, plays a role in resuming egg-laying and locomotion after starvation. The chain is Arrestin domain-containing protein 17 from Caenorhabditis elegans.